We begin with the raw amino-acid sequence, 61 residues long: U-scoloptoxin(14)-Sm1a (61 aa).

An N-terminal signal peptide occupies residues 1 to 24 (MNPKLCMLLLVCLMAFYVIETVQA).

It belongs to the scoloptoxin-14 family. In terms of processing, contains 4 disulfide bonds. In terms of tissue distribution, expressed by the venom gland.

It is found in the secreted. The sequence is that of U-scoloptoxin(14)-Sm1a from Scolopendra morsitans (Tanzanian blue ringleg centipede).